A 604-amino-acid chain; its full sequence is Lipoprotein LpqB (604 aa).

The N-terminal stretch at Met1–Gly27 is a signal peptide. Cys28 carries N-palmitoyl cysteine lipidation. Cys28 carries the S-diacylglycerol cysteine lipid modification. The interval Ser35–Asp60 is disordered.

Belongs to the LpqB lipoprotein family.

Its subcellular location is the cell membrane. The sequence is that of Lipoprotein LpqB from Nocardia farcinica (strain IFM 10152).